The chain runs to 74 residues: Defensin-like protein 39 (74 aa).

The signal sequence occupies residues 1-28 (MEKKSLAALSFLLLLVLFVAQEIVVTEA). Intrachain disulfides connect cysteine 31–cysteine 74, cysteine 42–cysteine 63, cysteine 48–cysteine 68, and cysteine 52–cysteine 70.

The protein belongs to the DEFL family. In terms of tissue distribution, pods.

It localises to the secreted. Its function is as follows. Possesses antifungal activity. In Pisum sativum (Garden pea), this protein is Defensin-like protein 39 (PI39).